Consider the following 222-residue polypeptide: UPF0502 protein SO_1867 (222 aa).

The span at 169–193 (EQVSATSLSADSPSADSNSLNAQDR) shows a compositional bias: polar residues. The disordered stretch occupies residues 169–195 (EQVSATSLSADSPSADSNSLNAQDRQQ).

This sequence belongs to the UPF0502 family.

The chain is UPF0502 protein SO_1867 from Shewanella oneidensis (strain ATCC 700550 / JCM 31522 / CIP 106686 / LMG 19005 / NCIMB 14063 / MR-1).